Consider the following 427-residue polypeptide: MVKVLGLVAILLIVLAGNVLSYDRQGTRKNLVIHPTNEDDPTFPDQVHISLVGPDKMRISWITQSSISPSVVYGTVSGKYEGSANGTSSSYHYLLIYRSGQINDVVIGPLKPNTVYYYKCGGPSSTQEFSFRTPPSKFPIKFAVSGDLGTSEWSKSTLEHVSKWDYDVFILPGDLSYANMYQPLWDTFGRLVQPLASQRPWMVTHGNHELEKIPILHSNPFTAYNKRWRMPFEESGSSSNLYYSFNVYGVHIIMLGSYTDFEPGSEQYQWLENNLKKIDRKTTPWVVAVVHAPWYNSNEAHQGEKESVEMKESMETLLYKARVDLVFAGHVHAYERFSRVYQDKFDKCGPVYINIGDGGNLEGLATKYRDPNPEISLFREASFGHGQLVVENATHARWEWHRNDDDVSVEKDSVWLTSLLADSSCKI.

A signal peptide spans methionine 1–serine 21. Asparagine 85 carries an N-linked (GlcNAc...) asparagine glycan. The Fe cation site is built by aspartate 147, aspartate 174, and tyrosine 177. Aspartate 174 is a binding site for Zn(2+). Zn(2+) contacts are provided by asparagine 207 and histidine 291. Residue asparagine 207 coordinates substrate. Histidine 301 functions as the Proton donor in the catalytic mechanism. Residue histidine 330 participates in Zn(2+) binding. Position 330-332 (histidine 330–histidine 332) interacts with substrate. Histidine 332 lines the Fe cation pocket. A glycan (N-linked (GlcNAc...) asparagine) is linked at asparagine 392.

This sequence belongs to the metallophosphoesterase superfamily. Purple acid phosphatase family. In terms of assembly, homodimer. The cofactor is Fe cation. Zn(2+) serves as cofactor. As to expression, expressed flowers and siliques.

The protein resides in the secreted. It catalyses the reaction a phosphate monoester + H2O = an alcohol + phosphate. This chain is Probable purple acid phosphatase 20 (PAP20), found in Arabidopsis thaliana (Mouse-ear cress).